The following is a 344-amino-acid chain: N-acetyl-gamma-glutamyl-phosphate reductase (344 aa).

The active site involves Cys-149.

It belongs to the NAGSA dehydrogenase family. Type 1 subfamily.

Its subcellular location is the cytoplasm. It catalyses the reaction N-acetyl-L-glutamate 5-semialdehyde + phosphate + NADP(+) = N-acetyl-L-glutamyl 5-phosphate + NADPH + H(+). The protein operates within amino-acid biosynthesis; L-arginine biosynthesis; N(2)-acetyl-L-ornithine from L-glutamate: step 3/4. In terms of biological role, catalyzes the NADPH-dependent reduction of N-acetyl-5-glutamyl phosphate to yield N-acetyl-L-glutamate 5-semialdehyde. The polypeptide is N-acetyl-gamma-glutamyl-phosphate reductase (Acidithiobacillus ferrooxidans (strain ATCC 23270 / DSM 14882 / CIP 104768 / NCIMB 8455) (Ferrobacillus ferrooxidans (strain ATCC 23270))).